Here is a 309-residue protein sequence, read N- to C-terminus: Isopentenyl-diphosphate Delta-isomerase II (309 aa).

Lysine 112 serves as a coordination point for substrate. Mg(2+) is bound by residues histidine 116 and histidine 128. Residues 126-278 enclose the Nudix hydrolase domain; the sequence is LLHRAFSVFL…GLKLSPWFRL (153 aa). Residues arginine 147 and lysine 151 each coordinate substrate. Cysteine 163 is an active-site residue. Serine 164 is a binding site for substrate. Mg(2+) contacts are provided by glutamate 223 and glutamate 225. Glutamate 225 is an active-site residue.

It belongs to the IPP isomerase type 1 family. The cofactor is Mg(2+).

The enzyme catalyses isopentenyl diphosphate = dimethylallyl diphosphate. The protein operates within isoprenoid biosynthesis; dimethylallyl diphosphate biosynthesis; dimethylallyl diphosphate from isopentenyl diphosphate: step 1/1. It participates in porphyrin-containing compound metabolism; chlorophyll biosynthesis. Catalyzes the 1,3-allylic rearrangement of the homoallylic substrate isopentenyl (IPP) to its highly electrophilic allylic isomer, dimethylallyl diphosphate (DMAPP). The sequence is that of Isopentenyl-diphosphate Delta-isomerase II (IPI2) from Camptotheca acuminata (Happy tree).